Reading from the N-terminus, the 85-residue chain is Conotoxin Lt28.5 (85 aa).

A signal peptide spans 1-21; sequence MPKLEMMLLVLLILPLCYIDA. Residues 22-40 constitute a propeptide that is removed on maturation; that stretch reads VGPPPPWNMEDEIIEHWQK.

This sequence belongs to the conotoxin D superfamily. In terms of processing, contains 5 disulfide bonds. In terms of tissue distribution, expressed by the venom duct.

The protein localises to the secreted. Its function is as follows. Probable neurotoxin. This chain is Conotoxin Lt28.5, found in Conus litteratus (Lettered cone).